A 717-amino-acid polypeptide reads, in one-letter code: Delta-1-pyrroline-5-carboxylate synthase (717 aa).

Residues 1–296 (MDAVDSTRAF…WAPVGDVGAR (296 aa)) form a glutamate 5-kinase region. Substrate-binding residues include serine 60, aspartate 157, and asparagine 176. ATP is bound by residues 196-197 (SD) and 236-242 (RGGMTAK). Residues 297–717 (DMAVAARESS…YTHKDLTSHA (421 aa)) are gamma-glutamyl phosphate reductase.

It in the N-terminal section; belongs to the glutamate 5-kinase family. The protein in the C-terminal section; belongs to the gamma-glutamyl phosphate reductase family. Expressed at high levels in leaves and is inducible in roots subjected to salt stress.

It catalyses the reaction L-glutamate + ATP = L-glutamyl 5-phosphate + ADP. The catalysed reaction is L-glutamate 5-semialdehyde + phosphate + NADP(+) = L-glutamyl 5-phosphate + NADPH + H(+). It functions in the pathway amino-acid biosynthesis; L-proline biosynthesis; L-glutamate 5-semialdehyde from L-glutamate: step 1/2. Its pathway is amino-acid biosynthesis; L-proline biosynthesis; L-glutamate 5-semialdehyde from L-glutamate: step 2/2. With respect to regulation, feedback regulated by proline. Its function is as follows. P5CS plays a key role in proline biosynthesis, leading to osmoregulation in plants. The chain is Delta-1-pyrroline-5-carboxylate synthase from Actinidia deliciosa (Kiwi).